A 124-amino-acid polypeptide reads, in one-letter code: Translation initiation factor 5A (124 aa).

The disordered stretch occupies residues 27–53 (TSYSTSKPGKHGSAKARVEGTGVFDGQ). Lysine 36 is modified (hypusine).

This sequence belongs to the eIF-5A family.

It localises to the cytoplasm. Its function is as follows. Functions by promoting the formation of the first peptide bond. The protein is Translation initiation factor 5A of Natronomonas pharaonis (strain ATCC 35678 / DSM 2160 / CIP 103997 / JCM 8858 / NBRC 14720 / NCIMB 2260 / Gabara) (Halobacterium pharaonis).